The chain runs to 441 residues: Glutamate--tRNA ligase 1 (441 aa).

Residues 8-18 (PSPTGYIHIGN) carry the 'HIGH' region motif. Positions 239 to 243 (ALSKR) match the 'KMSKS' region motif. K242 is a binding site for ATP.

The protein belongs to the class-I aminoacyl-tRNA synthetase family. Glutamate--tRNA ligase type 1 subfamily. Monomer.

Its subcellular location is the cytoplasm. It carries out the reaction tRNA(Glu) + L-glutamate + ATP = L-glutamyl-tRNA(Glu) + AMP + diphosphate. Functionally, catalyzes the attachment of glutamate to tRNA(Glu) in a two-step reaction: glutamate is first activated by ATP to form Glu-AMP and then transferred to the acceptor end of tRNA(Glu). This chain is Glutamate--tRNA ligase 1, found in Roseobacter denitrificans (strain ATCC 33942 / OCh 114) (Erythrobacter sp. (strain OCh 114)).